Here is a 108-residue protein sequence, read N- to C-terminus: uncharacterized protein (108 aa).

Positions 48–73 (NSNIPSSSSSSPSFASFFSSTSTSAT) are enriched in low complexity. The disordered stretch occupies residues 48-81 (NSNIPSSSSSSPSFASFFSSTSTSATLNGSSNNK).

This is an uncharacterized protein from Dictyostelium discoideum (Social amoeba).